The primary structure comprises 163 residues: SKP1-like protein 3 (163 aa).

The interaction with the F-box domain of F-box proteins stretch occupies residues 105 to 163 (LRAANYLNISGLLDLTCKAVADQMRGKTPAQMREHFNIKNDYTPEEEAEVRNENRWAFE).

This sequence belongs to the SKP1 family. Part of a SCF (SKP1-cullin-F-box) protein ligase complex. Interacts with ADO3/FKF1 and At3g61590. As to expression, highly expressed in siliques.

The protein localises to the nucleus. It participates in protein modification; protein ubiquitination. Involved in ubiquitination and subsequent proteasomal degradation of target proteins. Together with CUL1, RBX1 and a F-box protein, it forms a SCF E3 ubiquitin ligase complex. The functional specificity of this complex depends on the type of F-box protein. In the SCF complex, it serves as an adapter that links the F-box protein to CUL1. This is SKP1-like protein 3 (ASK3) from Arabidopsis thaliana (Mouse-ear cress).